A 252-amino-acid polypeptide reads, in one-letter code: Probable transcriptional regulatory protein Lxx10750 (252 aa).

Belongs to the TACO1 family.

The protein localises to the cytoplasm. The polypeptide is Probable transcriptional regulatory protein Lxx10750 (Leifsonia xyli subsp. xyli (strain CTCB07)).